The sequence spans 519 residues: GTPase Der (519 aa).

Composition is skewed to acidic residues over residues 1 to 12 (MDVEGAFADEEE) and 30 to 54 (GYED…PDFG). Residues 1-54 (MDVEGAFADEEELAPHGGWASADFDPAEFGYEDSDDDFDAEDFDETEFSNPDFG) are disordered. 2 consecutive EngA-type G domains span residues 81 to 244 (CTVA…PEEP) and 254 to 427 (RRVA…DNWD). Residues 87-94 (GRPNVGKS), 134-138 (DTGGW), 196-199 (NKFD), 260-267 (GKPNVGKS), 307-311 (DTAGL), and 372-375 (NKWD) each bind GTP. Residues 428 to 510 (RRISTGQLNT…PVRIAVRVRE (83 aa)) form the KH-like domain.

The protein belongs to the TRAFAC class TrmE-Era-EngA-EngB-Septin-like GTPase superfamily. EngA (Der) GTPase family. Associates with the 50S ribosomal subunit.

In terms of biological role, GTPase that plays an essential role in the late steps of ribosome biogenesis. The chain is GTPase Der from Corynebacterium glutamicum (strain ATCC 13032 / DSM 20300 / JCM 1318 / BCRC 11384 / CCUG 27702 / LMG 3730 / NBRC 12168 / NCIMB 10025 / NRRL B-2784 / 534).